A 745-amino-acid polypeptide reads, in one-letter code: Cysteine protease atg4 (745 aa).

Low complexity-rich tracts occupy residues 29-42 (QQSY…APQQ), 52-64 (SPTS…SSST), and 194-215 (NNNS…NNNN). Disordered stretches follow at residues 29–68 (QQSY…AMGN) and 192–215 (FQNN…NNNN). Cys262 serves as the catalytic Nucleophile. 2 disordered regions span residues 344–363 (LNRG…KEEE) and 439–480 (QNNN…NGYN). Positions 439–477 (QNNNKNNNNNNPTTTTTTTTTATSSNNNNNQSPPSRVPN) are enriched in low complexity. Residues Asp562 and His564 contribute to the active site. A disordered region spans residues 686–745 (HIPYNPNNNQNNNQNNNNNNNKNNNNNTNQQQTPNYPPKLNTYQPDFSSDGEIDDFTMVG). Low complexity predominate over residues 688-719 (PYNPNNNQNNNQNNNNNNNKNNNNNTNQQQTP). Over residues 734 to 745 (SDGEIDDFTMVG) the composition is skewed to acidic residues.

This sequence belongs to the peptidase C54 family.

The protein resides in the cytoplasm. The catalysed reaction is [protein]-C-terminal L-amino acid-glycyl-phosphatidylethanolamide + H2O = [protein]-C-terminal L-amino acid-glycine + a 1,2-diacyl-sn-glycero-3-phosphoethanolamine. In terms of biological role, cysteine protease that plays a key role in autophagy by mediating both proteolytic activation and delipidation of ATG8 family proteins. The protease activity is required for proteolytic activation of ATG8 family proteins: cleaves the C-terminal amino acid of ATG8 proteins to reveal a C-terminal glycine. Exposure of the glycine at the C-terminus is essential for ATG8 proteins conjugation to phosphatidylethanolamine (PE) and insertion to membranes, which is necessary for autophagy. In addition to the protease activity, also mediates delipidation of PE-conjugated ATG8 proteins. This Dictyostelium discoideum (Social amoeba) protein is Cysteine protease atg4 (atg4-1).